The primary structure comprises 1271 residues: Clustered mitochondria protein homolog (1271 aa).

TPR repeat units follow at residues 104–138 and 502–535; these read RHKP…ELGE and CYGL…KPHK. The Clu domain maps to 329-580; the sequence is DQSRPQLSIL…RSTPLDIDFI (252 aa). Residues 729-763 show a composition bias toward basic and acidic residues; that stretch reads QEEKSKIEDNEKAIEEEKKEEKTEKKEEKEEKADE. The interval 729-783 is disordered; it reads QEEKSKIEDNEKAIEEEKKEEKTEKKEEKEEKADEEKSENEEDKTKPEEPSKGVF. TPR repeat units lie at residues 1067–1100, 1109–1142, and 1151–1184; these read ISSY…WDFV, VTTL…SEKI, and AMIH…FSRH. Residues 1212–1271 form a disordered region; sequence QAKDKNKPKKVKAPPVPPQATTKKSKNKSKMAQTQISKLHLNSSTRFSSSSRVKPRLKKK. Residues 1241-1253 are compositionally biased toward polar residues; it reads KMAQTQISKLHLN. The span at 1254–1263 shows a compositional bias: low complexity; the sequence is SSTRFSSSSR.

It belongs to the CLU family. In terms of assembly, may associate with the eukaryotic translation initiation factor 3 (eIF-3) complex.

It localises to the cytoplasm. Functionally, mRNA-binding protein involved in proper cytoplasmic distribution of mitochondria. This Meyerozyma guilliermondii (strain ATCC 6260 / CBS 566 / DSM 6381 / JCM 1539 / NBRC 10279 / NRRL Y-324) (Yeast) protein is Clustered mitochondria protein homolog.